Here is a 347-residue protein sequence, read N- to C-terminus: NADH-ubiquinone oxidoreductase chain 2 (347 aa).

Transmembrane regions (helical) follow at residues 3 to 23, 25 to 45, 59 to 79, 96 to 116, 122 to 142, 149 to 169, 178 to 198, 201 to 221, 237 to 257, 274 to 294, and 323 to 343; these read PPIL…VMTS, HWML…PILM, YFLT…INLL, ILMT…FWVP, ISLS…LSVL, INPN…GWGG, IMAY…LYNP, MFLN…LFMI, APLI…LPPL, EMII…YFYM, and MIFL…TPMI.

It belongs to the complex I subunit 2 family. In terms of assembly, core subunit of respiratory chain NADH dehydrogenase (Complex I) which is composed of 45 different subunits. Interacts with TMEM242.

The protein localises to the mitochondrion inner membrane. It catalyses the reaction a ubiquinone + NADH + 5 H(+)(in) = a ubiquinol + NAD(+) + 4 H(+)(out). Core subunit of the mitochondrial membrane respiratory chain NADH dehydrogenase (Complex I) which catalyzes electron transfer from NADH through the respiratory chain, using ubiquinone as an electron acceptor. Essential for the catalytic activity and assembly of complex I. The chain is NADH-ubiquinone oxidoreductase chain 2 from Civettictis civetta (African civet).